Consider the following 399-residue polypeptide: Acetylornithine aminotransferase (399 aa).

Pyridoxal 5'-phosphate-binding positions include 102-103 (GA) and F138. Residue R141 participates in N(2)-acetyl-L-ornithine binding. Pyridoxal 5'-phosphate is bound at residue 223–226 (DEVQ). Residue K252 is modified to N6-(pyridoxal phosphate)lysine. Residue T280 participates in pyridoxal 5'-phosphate binding.

This sequence belongs to the class-III pyridoxal-phosphate-dependent aminotransferase family. ArgD subfamily. In terms of assembly, homodimer. Requires pyridoxal 5'-phosphate as cofactor.

It localises to the cytoplasm. It catalyses the reaction N(2)-acetyl-L-ornithine + 2-oxoglutarate = N-acetyl-L-glutamate 5-semialdehyde + L-glutamate. The protein operates within amino-acid biosynthesis; L-arginine biosynthesis; N(2)-acetyl-L-ornithine from L-glutamate: step 4/4. The polypeptide is Acetylornithine aminotransferase (Ralstonia nicotianae (strain ATCC BAA-1114 / GMI1000) (Ralstonia solanacearum)).